The chain runs to 258 residues: Small ribosomal subunit protein uS2 (258 aa).

The interval 227-258 (GEQFAPASEQKEEVKTQEVQEVEDSNDDVIDD) is disordered. Residues 235–244 (EQKEEVKTQE) show a composition bias toward basic and acidic residues. A compositionally biased stretch (acidic residues) spans 246–258 (QEVEDSNDDVIDD).

It belongs to the universal ribosomal protein uS2 family.

In Caldicellulosiruptor saccharolyticus (strain ATCC 43494 / DSM 8903 / Tp8T 6331), this protein is Small ribosomal subunit protein uS2.